Here is a 247-residue protein sequence, read N- to C-terminus: Ribonuclease 3 (247 aa).

One can recognise an RNase III domain in the interval 21–149 (LQKLSKKIGI…LVGAIYLDQG (129 aa)). Mg(2+) is bound at residue E62. Residue D66 is part of the active site. 2 residues coordinate Mg(2+): N135 and E138. E138 is a catalytic residue. The DRBM domain occupies 176-245 (DYKTQLQEYS…AKELYNRIRK (70 aa)).

Belongs to the ribonuclease III family. Homodimer. The cofactor is Mg(2+).

The protein localises to the cytoplasm. It catalyses the reaction Endonucleolytic cleavage to 5'-phosphomonoester.. Functionally, digests double-stranded RNA. Involved in the processing of primary rRNA transcript to yield the immediate precursors to the large and small rRNAs (23S and 16S). Processes some mRNAs, and tRNAs when they are encoded in the rRNA operon. Processes pre-crRNA and tracrRNA of type II CRISPR loci if present in the organism. The polypeptide is Ribonuclease 3 (Leptospira interrogans serogroup Icterohaemorrhagiae serovar copenhageni (strain Fiocruz L1-130)).